Reading from the N-terminus, the 75-residue chain is ATP synthase subunit epsilon, mitochondrial (75 aa).

Residues M1–L9 constitute a mitochondrion transit peptide.

It belongs to the eukaryotic ATPase epsilon family. F-type ATPases have 2 components, F(1) - the catalytic core - and F(o) - the membrane proton channel. F(1) has five subunits: alpha(3), beta(3), gamma(1), delta(1), epsilon(1), plus the additional subunit P18 (Tb427.05.1710) that is not present in F(1)F(o) ATP synthase from metazoa. Subunit P18 (Tb927.5.1710) interacts with the alpha subunit with a 1:1 stoichiometry; the interaction is direct. Subunit gamma is part of the central stalk. F(o) has three main subunits: a, b and c. The trypanosomal ATPase complex contains additional subunits that are not present in the F(1)F(o) ATP synthase from metazoa.

Its subcellular location is the mitochondrion. The protein resides in the mitochondrion inner membrane. In terms of biological role, mitochondrial membrane ATP synthase (F(1)F(o) ATP synthase) produces ATP from ADP in the presence of a proton gradient across the membrane which is generated by electron transport complexes of the respiratory chain. F-type ATPases consist of two structural domains, F(1) - containing the extramembraneous catalytic core, and F(o) - containing the membrane proton channel, linked together by a central stalk and a peripheral stalk. During catalysis, ATP synthesis in the catalytic domain of F(1) is coupled via a rotary mechanism of the central stalk subunits to proton translocation. Subunits alpha and beta form the catalytic core in F(1). Rotation of the central stalk against the surrounding alpha(3)beta(3) subunits leads to hydrolysis of ATP in three separate catalytic sites on the beta subunits. Contrary to the procyclic, insect form that requires F(1)F(o) ATP synthase for ATP synthesis, the bloodstream form relies on ATP hydrolysis by F(1)F(o) ATP synthase to maintain its mitochondrial membrane potential. This Trypanosoma brucei brucei protein is ATP synthase subunit epsilon, mitochondrial.